A 248-amino-acid polypeptide reads, in one-letter code: Putative glutamine amidotransferase-like protein C13C5.04 (248 aa).

Positions 13 to 217 (PMVEITSAYG…VKVLRGTEVF (205 aa)) constitute a Glutamine amidotransferase type-1 domain.

The sequence is that of Putative glutamine amidotransferase-like protein C13C5.04 from Schizosaccharomyces pombe (strain 972 / ATCC 24843) (Fission yeast).